Consider the following 459-residue polypeptide: uncharacterized protein (459 aa).

Residues 9–67 (KLEVGQTFPVTIKRLGINGEGVGYFKRQVVFIPGALPGEEVVAETTKIQRGFAEAKVKK) form the TRAM domain. Residues Cys80, Cys86, Cys89, and Cys168 each coordinate [4Fe-4S] cluster. Positions 292, 321, 342, and 390 each coordinate S-adenosyl-L-methionine. Catalysis depends on Cys417, which acts as the Nucleophile.

The protein belongs to the class I-like SAM-binding methyltransferase superfamily. RNA M5U methyltransferase family.

This is an uncharacterized protein from Bacillus anthracis.